A 308-amino-acid chain; its full sequence is Pantothenate synthetase (308 aa).

Residue 39–46 (MGALHDGH) participates in ATP binding. Histidine 46 (proton donor) is an active-site residue. (R)-pantoate is bound at residue glutamine 71. Glutamine 71 contacts beta-alanine. Position 157–160 (157–160 (GEKD)) interacts with ATP. Residue glutamine 163 coordinates (R)-pantoate. ATP contacts are provided by residues valine 186 and 194–197 (MSSR). Residues 286–308 (IETPAGTAGPDGDRQYAQSPWRN) are disordered.

This sequence belongs to the pantothenate synthetase family. As to quaternary structure, homodimer.

It localises to the cytoplasm. It catalyses the reaction (R)-pantoate + beta-alanine + ATP = (R)-pantothenate + AMP + diphosphate + H(+). It participates in cofactor biosynthesis; (R)-pantothenate biosynthesis; (R)-pantothenate from (R)-pantoate and beta-alanine: step 1/1. In terms of biological role, catalyzes the condensation of pantoate with beta-alanine in an ATP-dependent reaction via a pantoyl-adenylate intermediate. The protein is Pantothenate synthetase of Mycolicibacterium paratuberculosis (strain ATCC BAA-968 / K-10) (Mycobacterium paratuberculosis).